Consider the following 119-residue polypeptide: Large ribosomal subunit protein uL18 (119 aa).

Residues 1 to 25 (MITKIDKNKVRKKRHARVRSKISGT) are disordered. Residues 9-20 (KVRKKRHARVRS) are compositionally biased toward basic residues.

This sequence belongs to the universal ribosomal protein uL18 family. As to quaternary structure, part of the 50S ribosomal subunit; part of the 5S rRNA/L5/L18/L25 subcomplex. Contacts the 5S and 23S rRNAs.

In terms of biological role, this is one of the proteins that bind and probably mediate the attachment of the 5S RNA into the large ribosomal subunit, where it forms part of the central protuberance. This chain is Large ribosomal subunit protein uL18, found in Listeria monocytogenes serotype 4b (strain CLIP80459).